Reading from the N-terminus, the 470-residue chain is Glutamate--tRNA ligase (470 aa).

The 'HIGH' region signature appears at proline 12–glycine 22. The Zn(2+) site is built by cysteine 103, cysteine 105, cysteine 125, and aspartate 127. A 'KMSKS' region motif is present at residues lysine 236–arginine 240. Lysine 239 is an ATP binding site.

The protein belongs to the class-I aminoacyl-tRNA synthetase family. Glutamate--tRNA ligase type 1 subfamily. As to quaternary structure, monomer. Zn(2+) serves as cofactor.

Its subcellular location is the cytoplasm. It carries out the reaction tRNA(Glu) + L-glutamate + ATP = L-glutamyl-tRNA(Glu) + AMP + diphosphate. Functionally, catalyzes the attachment of glutamate to tRNA(Glu) in a two-step reaction: glutamate is first activated by ATP to form Glu-AMP and then transferred to the acceptor end of tRNA(Glu). The sequence is that of Glutamate--tRNA ligase from Frankia casuarinae (strain DSM 45818 / CECT 9043 / HFP020203 / CcI3).